The chain runs to 282 residues: Formamidopyrimidine-DNA glycosylase (282 aa).

The Schiff-base intermediate with DNA role is filled by Pro-2. Glu-3 acts as the Proton donor in catalysis. Catalysis depends on Lys-61, which acts as the Proton donor; for beta-elimination activity. DNA contacts are provided by His-93, Arg-112, and Lys-158. An FPG-type zinc finger spans residues 244 to 278 (DAYGREGEPCRRCGAIMRRDKFMNRSSFYCPRCQP). The active-site Proton donor; for delta-elimination activity is Arg-268.

The protein belongs to the FPG family. As to quaternary structure, monomer. Requires Zn(2+) as cofactor.

It catalyses the reaction Hydrolysis of DNA containing ring-opened 7-methylguanine residues, releasing 2,6-diamino-4-hydroxy-5-(N-methyl)formamidopyrimidine.. The catalysed reaction is 2'-deoxyribonucleotide-(2'-deoxyribose 5'-phosphate)-2'-deoxyribonucleotide-DNA = a 3'-end 2'-deoxyribonucleotide-(2,3-dehydro-2,3-deoxyribose 5'-phosphate)-DNA + a 5'-end 5'-phospho-2'-deoxyribonucleoside-DNA + H(+). Functionally, involved in base excision repair of DNA damaged by oxidation or by mutagenic agents. Acts as a DNA glycosylase that recognizes and removes damaged bases. Has a preference for oxidized purines, such as 7,8-dihydro-8-oxoguanine (8-oxoG). Has AP (apurinic/apyrimidinic) lyase activity and introduces nicks in the DNA strand. Cleaves the DNA backbone by beta-delta elimination to generate a single-strand break at the site of the removed base with both 3'- and 5'-phosphates. In Mycolicibacterium gilvum (strain PYR-GCK) (Mycobacterium gilvum (strain PYR-GCK)), this protein is Formamidopyrimidine-DNA glycosylase.